A 357-amino-acid chain; its full sequence is MAIKKVGILGATGTVGQRFITLLSDHPEFKIAVLGASARSAGKPYAVATKWKQSIAMPKEISQMSVKACDPKEFSECDIVFSGLDADFAGEIEKSFRDANLVIVSNAKNYRREPTVPLVVPTVNTDHLDVIKYQRQENKLDRGCIITNSNCSTAAVVVPLKALQDAFGPIAQTNVVSMQAISGAGYPGVSSLDILDNIVPFIGGEEEKIEWETRKILGSVNSTISGYELTDNVVSAQCNRVPVIDGHLMCISVKFAKTSPTPDQVREVLANYVSEPQKLGCYSAPKQAIYVFDDSTPDRPQPRLDRNNENGYAVSVGRIRSDSIFDIKFVSLVHNTVLGAAGAGILNAEVAVKKGLM.

NADP(+)-binding residues include Thr-12, Gly-13, Thr-14, Val-15, Ser-37, Ser-40, Leu-84, and Asp-85. Cys-151 (acyl-thioester intermediate) is an active-site residue. Gly-183 lines the NADP(+) pocket. Catalysis depends on His-247, which acts as the Proton acceptor. Ser-323 carries the post-translational modification Phosphoserine. Residue Asn-335 coordinates NADP(+).

Belongs to the aspartate-semialdehyde dehydrogenase family.

Its subcellular location is the cytoplasm. It is found in the cytosol. The protein resides in the nucleus. It catalyses the reaction L-aspartate 4-semialdehyde + phosphate + NADP(+) = 4-phospho-L-aspartate + NADPH + H(+). Its pathway is amino-acid biosynthesis; L-methionine biosynthesis via de novo pathway; L-homoserine from L-aspartate: step 2/3. The protein operates within amino-acid biosynthesis; L-threonine biosynthesis; L-threonine from L-aspartate: step 2/5. Functionally, catalyzes the NADPH-dependent formation of L-aspartate 4-semialdehyde (L-ASA) by the reductive dephosphorylation of 4-phospho-L-aspartate. Mediates the second step in the biosynthesis of amino acids that derive from aspartate (the aspartate family of amino acids), including methioinine and threonine, the latter of which is a precursor to isoleucine. This is Aspartate-semialdehyde dehydrogenase from Schizosaccharomyces pombe (strain 972 / ATCC 24843) (Fission yeast).